A 347-amino-acid polypeptide reads, in one-letter code: Phosphate acyltransferase (347 aa).

It belongs to the PlsX family. As to quaternary structure, homodimer. Probably interacts with PlsY.

Its subcellular location is the cytoplasm. It catalyses the reaction a fatty acyl-[ACP] + phosphate = an acyl phosphate + holo-[ACP]. It participates in lipid metabolism; phospholipid metabolism. Catalyzes the reversible formation of acyl-phosphate (acyl-PO(4)) from acyl-[acyl-carrier-protein] (acyl-ACP). This enzyme utilizes acyl-ACP as fatty acyl donor, but not acyl-CoA. The polypeptide is Phosphate acyltransferase (Syntrophotalea carbinolica (strain DSM 2380 / NBRC 103641 / GraBd1) (Pelobacter carbinolicus)).